Here is a 473-residue protein sequence, read N- to C-terminus: Photosystem II CP43 reaction center protein (473 aa).

Residues 1–14 (MKTLYSLRRSYPVE) constitute a propeptide that is removed on maturation. Thr15 is subject to N-acetylthreonine. Thr15 carries the post-translational modification Phosphothreonine. 5 helical membrane passes run 69–93 (LFEV…PHLA), 134–155 (LIGP…KDRN), 178–200 (KALY…RKIT), 255–275 (KPFA…LSYS), and 291–312 (WFNN…ASQA). A [CaMn4O5] cluster-binding site is contributed by Glu367. A helical membrane pass occupies residues 447–471 (RARAAAAGFEKGIDRDFEPVLSMTP).

Belongs to the PsbB/PsbC family. PsbC subfamily. In terms of assembly, PSII is composed of 1 copy each of membrane proteins PsbA, PsbB, PsbC, PsbD, PsbE, PsbF, PsbH, PsbI, PsbJ, PsbK, PsbL, PsbM, PsbT, PsbX, PsbY, PsbZ, Psb30/Ycf12, at least 3 peripheral proteins of the oxygen-evolving complex and a large number of cofactors. It forms dimeric complexes. Requires Binds multiple chlorophylls and provides some of the ligands for the Ca-4Mn-5O cluster of the oxygen-evolving complex. It may also provide a ligand for a Cl- that is required for oxygen evolution. PSII binds additional chlorophylls, carotenoids and specific lipids. as cofactor.

The protein resides in the plastid. It is found in the chloroplast thylakoid membrane. One of the components of the core complex of photosystem II (PSII). It binds chlorophyll and helps catalyze the primary light-induced photochemical processes of PSII. PSII is a light-driven water:plastoquinone oxidoreductase, using light energy to abstract electrons from H(2)O, generating O(2) and a proton gradient subsequently used for ATP formation. This is Photosystem II CP43 reaction center protein from Pinus koraiensis (Korean pine).